The chain runs to 113 residues: Putative pterin-4-alpha-carbinolamine dehydratase (113 aa).

The protein belongs to the pterin-4-alpha-carbinolamine dehydratase family.

It catalyses the reaction (4aS,6R)-4a-hydroxy-L-erythro-5,6,7,8-tetrahydrobiopterin = (6R)-L-erythro-6,7-dihydrobiopterin + H2O. The polypeptide is Putative pterin-4-alpha-carbinolamine dehydratase (Legionella pneumophila (strain Paris)).